The following is an 854-amino-acid chain: DNA mismatch repair protein MutS (854 aa).

Residue 614 to 621 (GPNMGGKS) coordinates ATP.

The protein belongs to the DNA mismatch repair MutS family.

Its function is as follows. This protein is involved in the repair of mismatches in DNA. It is possible that it carries out the mismatch recognition step. This protein has a weak ATPase activity. This Yersinia pestis bv. Antiqua (strain Antiqua) protein is DNA mismatch repair protein MutS.